Consider the following 658-residue polypeptide: Putative phospholipase B-like lamina ancestor (658 aa).

Residues 1-29 form the signal peptide; it reads MLKVVGASWQKTRIGTYILIGAGLLVIGA. N-linked (GlcNAc...) asparagine glycosylation is found at N229, N465, and N486.

It belongs to the phospholipase B-like family. Expressed in neural and glial progenitors prior to, but not after, differentiation. Not expressed in late third instar disks, but is expressed uniformly by early third instar disks, in the imaginal ring of the proventriculus and in the salivary gland.

It localises to the secreted. Functionally, putative phospholipase. Involved in the regulation of cellular plasticity in imaginal disks. The polypeptide is Putative phospholipase B-like lamina ancestor (lama) (Drosophila melanogaster (Fruit fly)).